Consider the following 1040-residue polypeptide: Multidrug resistance protein MdtB (1040 aa).

11 helical membrane passes run 15–37, 343–365, 369–391, 398–420, 440–462, 474–496, 535–557, 867–889, 909–931, 968–990, and 1000–1022; these read LFILRPVATTLLMIAILLAGIIG, VQFELLLAIALVVMVIYLFLRNA, LIPSIAVPLSLVGTFAAMYFLGF, LMALTIATGFVVDDAIVVIENIA, IGFTIISLTFSLIAVLIPLLFMG, VTLAVSILISAVVSLTLTPMMCA, HPWLTLSVALGTLLLTILLYIWI, VWLIVAAIVAMYIVLGVLYESFI, LMMAGKDLDVIAIIGIILLIGIV, ILMTTMAALLSALPLMLSTGVGA, and MVGGLIMSQILTLFTTPVIYLLF.

The protein belongs to the resistance-nodulation-cell division (RND) (TC 2.A.6) family. MdtB subfamily. As to quaternary structure, part of a tripartite efflux system composed of MdtA, MdtB and MdtC. MdtB forms a heteromultimer with MdtC.

The protein resides in the cell inner membrane. This is Multidrug resistance protein MdtB from Pectobacterium atrosepticum (strain SCRI 1043 / ATCC BAA-672) (Erwinia carotovora subsp. atroseptica).